We begin with the raw amino-acid sequence, 285 residues long: NADPH-dependent 7-cyano-7-deazaguanine reductase (285 aa).

91–93 serves as a coordination point for substrate; the sequence is IES. 93-94 is a binding site for NADPH; sequence SK. Cysteine 193 functions as the Thioimide intermediate in the catalytic mechanism. Aspartate 200 (proton donor) is an active-site residue. 232–233 contacts substrate; the sequence is HE. 261 to 262 lines the NADPH pocket; sequence RG.

It belongs to the GTP cyclohydrolase I family. QueF type 2 subfamily. As to quaternary structure, homodimer.

The protein localises to the cytoplasm. The enzyme catalyses 7-aminomethyl-7-carbaguanine + 2 NADP(+) = 7-cyano-7-deazaguanine + 2 NADPH + 3 H(+). It participates in tRNA modification; tRNA-queuosine biosynthesis. Its function is as follows. Catalyzes the NADPH-dependent reduction of 7-cyano-7-deazaguanine (preQ0) to 7-aminomethyl-7-deazaguanine (preQ1). The polypeptide is NADPH-dependent 7-cyano-7-deazaguanine reductase (Shewanella baltica (strain OS223)).